We begin with the raw amino-acid sequence, 623 residues long: MDDQNKNLILATGLSFLVIMVWFFLFPPPEAVTEGETTVATQQTAVAPSATPDAPTTAVPPDAELPETQRVVIDTPRLQGSISMLGGRLDDLSLKSYHETLDPQSQIVRLLSPVGQPNAYYALYGWTPAGALGYEDVPGANTTWTQVGSGALGVDQPVTLQWDNGKGLVFTRTISVDDHYMFSVAQTVENNSGQAVQLAPYGIVARHGKPLNLQNFFVLHEGVVGRADGKLTETKYDKVAELPQVAREGAQAEVIDAQQDGWIGFTDKYWMTTLIPQQGQPFTSVTKYVPGADIYQAETREQLVTVAPGATAEVSSRLFAGAKEWETIRAYQNEGATEPTEGAEPIPGFIDSIDWGWFFFLTKPIFTVLHWLNHMIGNMGLAIIALTFLLKALVLPLAYKSYVSMARMKELQPELEALRERAGDDKMLMQREMMRLYKEKQVNPAAGCLPILIQIPIFFSLYKVIFVTIELRHAPFFGWLKDLSAPDPSSIFNFFGLAPWAAPTPGTTMALIFIGALPILLGVSMWLQQKLNPAPGDKAQAMIFAWMPWVFMFMLGHFASGLVLYWIVNNLITFTQQYVIMRSHGHHPDIFGNIKASFSRKPAAQPAGKAANDGAAPAKKRKP.

Transmembrane regions (helical) follow at residues 8-28 (LILATGLSFLVIMVWFFLFPP), 379-399 (MGLAIIALTFLLKALVLPLAY), 449-469 (LPILIQIPIFFSLYKVIFVTI), 507-527 (TTMALIFIGALPILLGVSMWL), and 543-563 (IFAWMPWVFMFMLGHFASGLV). Low complexity predominate over residues 601–617 (KPAAQPAGKAANDGAAP). The segment at 601-623 (KPAAQPAGKAANDGAAPAKKRKP) is disordered.

Belongs to the OXA1/ALB3/YidC family. Type 1 subfamily. In terms of assembly, interacts with the Sec translocase complex via SecD. Specifically interacts with transmembrane segments of nascent integral membrane proteins during membrane integration.

It is found in the cell inner membrane. Its function is as follows. Required for the insertion and/or proper folding and/or complex formation of integral membrane proteins into the membrane. Involved in integration of membrane proteins that insert both dependently and independently of the Sec translocase complex, as well as at least some lipoproteins. Aids folding of multispanning membrane proteins. The polypeptide is Membrane protein insertase YidC (Cereibacter sphaeroides (strain ATCC 17029 / ATH 2.4.9) (Rhodobacter sphaeroides)).